We begin with the raw amino-acid sequence, 343 residues long: Methylthioribose-1-phosphate isomerase (343 aa).

Residues 48–50 (RGA), Arg88, and Gln193 each bind substrate. Residue Asp234 is the Proton donor of the active site. Substrate is bound at residue 244–245 (NK).

It belongs to the eIF-2B alpha/beta/delta subunits family. MtnA subfamily.

It carries out the reaction 5-(methylsulfanyl)-alpha-D-ribose 1-phosphate = 5-(methylsulfanyl)-D-ribulose 1-phosphate. It participates in amino-acid biosynthesis; L-methionine biosynthesis via salvage pathway; L-methionine from S-methyl-5-thio-alpha-D-ribose 1-phosphate: step 1/6. Its function is as follows. Catalyzes the interconversion of methylthioribose-1-phosphate (MTR-1-P) into methylthioribulose-1-phosphate (MTRu-1-P). This Thermotoga maritima (strain ATCC 43589 / DSM 3109 / JCM 10099 / NBRC 100826 / MSB8) protein is Methylthioribose-1-phosphate isomerase.